Here is a 209-residue protein sequence, read N- to C-terminus: Uracil phosphoribosyltransferase (209 aa).

5-phospho-alpha-D-ribose 1-diphosphate is bound by residues Arg79, Arg104, and 131-139 (DPMLATGGS). Uracil contacts are provided by residues Ile194 and 199–201 (GDA). Asp200 contributes to the 5-phospho-alpha-D-ribose 1-diphosphate binding site.

It belongs to the UPRTase family. Mg(2+) serves as cofactor.

It catalyses the reaction UMP + diphosphate = 5-phospho-alpha-D-ribose 1-diphosphate + uracil. It functions in the pathway pyrimidine metabolism; UMP biosynthesis via salvage pathway; UMP from uracil: step 1/1. Its activity is regulated as follows. Allosterically activated by GTP. In terms of biological role, catalyzes the conversion of uracil and 5-phospho-alpha-D-ribose 1-diphosphate (PRPP) to UMP and diphosphate. In Ligilactobacillus salivarius (strain UCC118) (Lactobacillus salivarius), this protein is Uracil phosphoribosyltransferase.